The chain runs to 216 residues: MSCLPALDKFLDNYHRSYLSTLGELPRYYPQGEPSLCIQGEFDEASDEAVSWLPVKREHLGSFANVEHALELTLWPDINHFYGEYFAAPVLFDSPWGTGELLQVWNEADFDALQQNIIGHLMMKQKLKQPATWFIGLLDEGDKMLTVDNADGSVWGEIPGELPSAQLAPSLAEFIEALSPRIAPPVKHEELPMPALEHPGIVASFKRMWHNLIGKR.

It belongs to the Syd family.

The protein resides in the cell inner membrane. Its function is as follows. Interacts with the SecY protein in vivo. May bind preferentially to an uncomplexed state of SecY, thus functioning either as a chelating agent for excess SecY in the cell or as a regulatory factor that negatively controls the translocase function. The protein is Protein Syd of Shewanella sp. (strain ANA-3).